Here is a 587-residue protein sequence, read N- to C-terminus: Cryptochrome-1 (587 aa).

One can recognise a Photolyase/cryptochrome alpha/beta domain in the interval 3 to 132 (VNAVHWFRKG…EVIVRISHTL (130 aa)). Residue Lys-11 forms a Glycyl lysine isopeptide (Lys-Gly) (interchain with G-Cter in ubiquitin) linkage. Residues 50–54 (NRWRF) carry the LIR 1 motif. Ser-71 bears the Phosphoserine; by AMPK mark. Residues 82 to 87 (DVFPRL) carry the LIR 2 motif. Lys-107 participates in a covalent cross-link: Glycyl lysine isopeptide (Lys-Gly) (interchain with G-Cter in ubiquitin). The LIR 3 signature appears at 151–156 (KRFQTL). Lys-159 participates in a covalent cross-link: Glycyl lysine isopeptide (Lys-Gly) (interchain with G-Cter in ubiquitin). Phosphoserine; by MAPK is present on Ser-247. An FAD-binding site is contributed by Ser-252. Short sequence motifs (LIR) lie at residues 255 to 260 (LRFGCL) and 271 to 276 (DLYKKV). Ser-280 bears the Phosphoserine; by AMPK mark. Residues 285–290 (SLYGQL) carry the LIR 6 motif. Gln-289 provides a ligand contact to FAD. Lys-329 participates in a covalent cross-link: Glycyl lysine isopeptide (Lys-Gly) (interchain with G-Cter in ubiquitin). An LIR 7 motif is present at residues 335–339 (TGFPW). His-355 serves as a coordination point for FAD. Residues 371 to 470 (WISWEEGMKV…LIGVNYPKPM (100 aa)) form a required for inhibition of CLOCK-BMAL1-mediated transcription region. An LIR 8 motif is present at residues 379-384 (KVFEEL). Position 387–389 (387–389 (DAD)) interacts with FAD. Short sequence motifs (LIR) lie at residues 395–400 (GSWMWL), 411–416 (HCYCPV), and 430–435 (RRYLPV). The interval 471 to 493 (VNHAEASRLNIERMKQIYQQLSR) is interaction with TIMELESS. A Glycyl lysine isopeptide (Lys-Gly) (interchain with G-Cter in ubiquitin) cross-link involves residue Lys-485. Short sequence motifs (LIR) lie at residues 486 to 491 (QIYQQL) and 492 to 497 (SRYRGL). The segment at 554–587 (GSSSMGHGLSNGKRPSQEEDTQSIGPKVQRQSTN) is disordered. Position 569 is a phosphoserine (Ser-569).

The protein belongs to the DNA photolyase class-1 family. As to quaternary structure, component of the circadian core oscillator, which includes the CRY proteins, CLOCK or NPAS2, BMAL1 or BMAL2, CSNK1D and/or CSNK1E, TIMELESS, and the PER proteins. Interacts directly with TIMELESS. Interacts directly with PER1, PER2 and PER3; interaction with PER2 inhibits its ubiquitination and vice versa. Interacts with FBXL21. Interacts with FBXL3. Interacts with CLOCK-BMAL1 independently of PER2 and DNA. Interacts with HDAC1, HDAC2 and SIN3B. Interacts with nuclear receptors AR, NR1D1, NR3C1/GR, RORA and RORC; the interaction with at least NR3C1/GR is ligand dependent. Interacts with PRKDC. Interacts with the G protein subunit alpha GNAS; the interaction may block GPCR-mediated regulation of cAMP concentrations. Interacts with PRMT5. Interacts with EZH2. Interacts with MYBBP1A, DOCK7, HNRNPU, RPL7A, RPL8 and RPS3. Interacts with PPP5C (via TPR repeats). Interacts with MAP1LC3B. Interacts with CLOCK. Interacts with BMAL1. Interacts weakly with HDAC3; this interaction is enhanced in the presence of FBXL3. Interacts with TRIM28, KCTD5 and DDB1 Interacts with HNF4A. Interacts with PSMD2 in a KDM8-dependent manner. Interacts with KDM8 in a FBXL3-dependent manner. Interacts with PPARG in a ligand-dependent manner. Interacts with PPARD (via domain NR LBD) and NR1I2 (via domain NR LBD) in a ligand-dependent manner. Interacts with PPARA, NR1I3 and VDR. Requires FAD as cofactor. (6R)-5,10-methylene-5,6,7,8-tetrahydrofolate serves as cofactor. Phosphorylation on Ser-247 by MAPK is important for the inhibition of CLOCK-BMAL1-mediated transcriptional activity. Phosphorylation by CSNK1E requires interaction with PER1 or PER2. Phosphorylation at Ser-71 and Ser-280 by AMPK decreases protein stability. Phosphorylation at Ser-569 exhibits a robust circadian rhythm with a peak at CT8, increases protein stability, prevents SCF(FBXL3)-mediated degradation and is antagonized by interaction with PRKDC. In terms of processing, ubiquitinated by the SCF(FBXL3) and SCF(FBXL21) complexes, regulating the balance between degradation and stabilization. The SCF(FBXL3) complex is mainly nuclear and mediates ubiquitination and subsequent degradation of CRY1. In contrast, cytoplasmic SCF(FBXL21) complex-mediated ubiquitination leads to stabilize CRY1 and counteract the activity of the SCF(FBXL3) complex. The SCF(FBXL3) and SCF(FBXL21) complexes probably mediate ubiquitination at different Lys residues. Ubiquitination at Lys-11 and Lys-107 are specifically ubiquitinated by the SCF(FBXL21) complex but not by the SCF(FBXL3) complex. Ubiquitination may be inhibited by PER2. Deubiquitinated by USP7. Post-translationally, undergoes autophagy-mediated degradation in the liver in a time-dependent manner. Autophagic degradation of CRY1 (an inhibitor of gluconeogenesis) occurs during periods of reduced feeding allowing induction of gluconeogenesis and maintenance of blood glucose levels. In terms of tissue distribution, expressed in all tissues tested including spleen, liver, skeletal muscle, kidney, brain, intestine, eye, harderian gland, liver and heart. Highest levels in the eye, brain, kidney and harderian gland. In the brain, especially located to the suprachiasma nucleus (SCN).

Its subcellular location is the cytoplasm. The protein resides in the nucleus. Functionally, transcriptional repressor which forms a core component of the circadian clock. The circadian clock, an internal time-keeping system, regulates various physiological processes through the generation of approximately 24 hour circadian rhythms in gene expression, which are translated into rhythms in metabolism and behavior. It is derived from the Latin roots 'circa' (about) and 'diem' (day) and acts as an important regulator of a wide array of physiological functions including metabolism, sleep, body temperature, blood pressure, endocrine, immune, cardiovascular, and renal function. Consists of two major components: the central clock, residing in the suprachiasmatic nucleus (SCN) of the brain, and the peripheral clocks that are present in nearly every tissue and organ system. Both the central and peripheral clocks can be reset by environmental cues, also known as Zeitgebers (German for 'timegivers'). The predominant Zeitgeber for the central clock is light, which is sensed by retina and signals directly to the SCN. The central clock entrains the peripheral clocks through neuronal and hormonal signals, body temperature and feeding-related cues, aligning all clocks with the external light/dark cycle. Circadian rhythms allow an organism to achieve temporal homeostasis with its environment at the molecular level by regulating gene expression to create a peak of protein expression once every 24 hours to control when a particular physiological process is most active with respect to the solar day. Transcription and translation of core clock components (CLOCK, NPAS2, BMAL1, BMAL2, PER1, PER2, PER3, CRY1 and CRY2) plays a critical role in rhythm generation, whereas delays imposed by post-translational modifications (PTMs) are important for determining the period (tau) of the rhythms (tau refers to the period of a rhythm and is the length, in time, of one complete cycle). A diurnal rhythm is synchronized with the day/night cycle, while the ultradian and infradian rhythms have a period shorter and longer than 24 hours, respectively. Disruptions in the circadian rhythms contribute to the pathology of cardiovascular diseases, cancer, metabolic syndromes and aging. A transcription/translation feedback loop (TTFL) forms the core of the molecular circadian clock mechanism. Transcription factors, CLOCK or NPAS2 and BMAL1 or BMAL2, form the positive limb of the feedback loop, act in the form of a heterodimer and activate the transcription of core clock genes and clock-controlled genes (involved in key metabolic processes), harboring E-box elements (5'-CACGTG-3') within their promoters. The core clock genes: PER1/2/3 and CRY1/2 which are transcriptional repressors form the negative limb of the feedback loop and interact with the CLOCK|NPAS2-BMAL1|BMAL2 heterodimer inhibiting its activity and thereby negatively regulating their own expression. This heterodimer also activates nuclear receptors NR1D1/2 and RORA/B/G, which form a second feedback loop and which activate and repress BMAL1 transcription, respectively. CRY1 and CRY2 have redundant functions but also differential and selective contributions at least in defining the pace of the SCN circadian clock and its circadian transcriptional outputs. More potent transcriptional repressor in cerebellum and liver than CRY2, though more effective in lengthening the period of the SCN oscillator. On its side, CRY2 seems to play a critical role in tuning SCN circadian period by opposing the action of CRY1. With CRY2, is dispensable for circadian rhythm generation but necessary for the development of intercellular networks for rhythm synchrony. Capable of translocating circadian clock core proteins such as PER proteins to the nucleus. Interacts with CLOCK-BMAL1 independently of PER proteins and is found at CLOCK-BMAL1-bound sites, suggesting that CRY may act as a molecular gatekeeper to maintain CLOCK-BMAL1 in a poised and repressed state until the proper time for transcriptional activation. Represses the CLOCK-BMAL1 induced transcription of BHLHE40/DEC1, ATF4, MTA1, KLF10 and NAMPT. May repress circadian target genes expression in collaboration with HDAC1 and HDAC2 through histone deacetylation. Mediates the clock-control activation of ATR and modulates ATR-mediated DNA damage checkpoint. In liver, mediates circadian regulation of cAMP signaling and gluconeogenesis by binding to membrane-coupled G proteins and blocking glucagon-mediated increases in intracellular cAMP concentrations and CREB1 phosphorylation. Inhibits hepatic gluconeogenesis by decreasing nuclear FOXO1 levels that down-regulates gluconeogenic gene expression. Besides its role in the maintenance of the circadian clock, is also involved in the regulation of other processes. Represses glucocorticoid receptor NR3C1/GR-induced transcriptional activity by binding to glucocorticoid response elements (GREs). Plays a key role in glucose and lipid metabolism modulation, in part, through the transcriptional regulation of genes involved in these pathways, such as LEP or ACSL4. Represses PPARD and its target genes in the skeletal muscle and limits exercise capacity. Plays an essential role in the generation of circadian rhythms in the retina. Represses the transcriptional activity of NR1I2. This chain is Cryptochrome-1 (CRY1), found in Spalax judaei (Judean Mountains blind mole rat).